Consider the following 176-residue polypeptide: NADH-quinone oxidoreductase subunit I 2 (176 aa).

4Fe-4S ferredoxin-type domains are found at residues 45-77 (IVLTRDPDGGERCVACYLCSAACPVDCISMEAA) and 87-116 (RWFRINFSRCIFCGLCAEACPTLAIQMTPD). Positions 57, 60, 63, 67, 96, 99, 102, and 106 each coordinate [4Fe-4S] cluster.

Belongs to the complex I 23 kDa subunit family. In terms of assembly, NDH-1 is composed of 14 different subunits. Subunits NuoA, H, J, K, L, M, N constitute the membrane sector of the complex. [4Fe-4S] cluster is required as a cofactor.

The protein localises to the cell inner membrane. The catalysed reaction is a quinone + NADH + 5 H(+)(in) = a quinol + NAD(+) + 4 H(+)(out). Functionally, NDH-1 shuttles electrons from NADH, via FMN and iron-sulfur (Fe-S) centers, to quinones in the respiratory chain. The immediate electron acceptor for the enzyme in this species is believed to be ubiquinone. Couples the redox reaction to proton translocation (for every two electrons transferred, four hydrogen ions are translocated across the cytoplasmic membrane), and thus conserves the redox energy in a proton gradient. The chain is NADH-quinone oxidoreductase subunit I 2 from Geobacter sulfurreducens (strain ATCC 51573 / DSM 12127 / PCA).